The primary structure comprises 418 residues: Probable serine hydroxymethyltransferase (418 aa).

Residues Leu-118 and 122–124 (GHL) contribute to the (6S)-5,6,7,8-tetrahydrofolate site. Lys-226 carries the N6-(pyridoxal phosphate)lysine modification. 351 to 353 (SPF) lines the (6S)-5,6,7,8-tetrahydrofolate pocket.

It belongs to the SHMT family. As to quaternary structure, homodimer. Requires pyridoxal 5'-phosphate as cofactor.

The protein localises to the cytoplasm. The catalysed reaction is (6R)-5,10-methylene-5,6,7,8-tetrahydrofolate + glycine + H2O = (6S)-5,6,7,8-tetrahydrofolate + L-serine. The protein operates within one-carbon metabolism; tetrahydrofolate interconversion. Its function is as follows. Catalyzes the reversible interconversion of serine and glycine with tetrahydrofolate (THF) serving as the one-carbon carrier. This reaction serves as the major source of one-carbon groups required for the biosynthesis of purines, thymidylate, methionine, and other important biomolecules. This Mesomycoplasma hyopneumoniae (strain 7448) (Mycoplasma hyopneumoniae) protein is Probable serine hydroxymethyltransferase.